The sequence spans 427 residues: Putative tyrosine recombinase XerC (427 aa).

Residues 1 to 81 (MTPQQLTEEY…HLRTIWGYAI (81 aa)) enclose the Core-binding (CB) domain. Residues 116-305 (RARSWLSMQV…DYDHMRAVLH (190 aa)) form the Tyr recombinase domain. Catalysis depends on residues arginine 156, lysine 183, histidine 256, arginine 259, and histidine 283. Residue tyrosine 292 is the O-(3'-phospho-DNA)-tyrosine intermediate of the active site. Disordered regions lie at residues 323–384 (SGSP…PPDT) and 401–427 (RAAT…DSLA). Positions 350 to 362 (ARTEPSEPREHTQ) are enriched in basic and acidic residues. Positions 402-413 (AATASAVPAATS) are enriched in low complexity.

It belongs to the 'phage' integrase family.

The protein localises to the cytoplasm. Functionally, site-specific tyrosine recombinase, which acts by catalyzing the cutting and rejoining of the recombining DNA molecules. The protein is Putative tyrosine recombinase XerC of Pseudomonas aeruginosa.